Here is a 53-residue protein sequence, read N- to C-terminus: Rubredoxin-1 (53 aa).

Residues Met1–Glu53 enclose the Rubredoxin-like domain. Fe cation contacts are provided by Cys6, Cys9, Cys39, and Cys42.

Belongs to the rubredoxin family. It depends on Fe(3+) as a cofactor.

In terms of biological role, rubredoxin is a small nonheme, iron protein lacking acid-labile sulfide. Its single Fe, chelated to 4 Cys, functions as an electron acceptor and may also stabilize the conformation of the molecule. This is Rubredoxin-1 (rubR1) from Clostridium perfringens (strain 13 / Type A).